An 88-amino-acid polypeptide reads, in one-letter code: Small ribosomal subunit protein bS20 (88 aa).

The disordered stretch occupies residues 1–27 (MANSKSAKKRALQSEKRRQHNASRRSM).

The protein belongs to the bacterial ribosomal protein bS20 family.

Functionally, binds directly to 16S ribosomal RNA. The protein is Small ribosomal subunit protein bS20 of Shewanella sediminis (strain HAW-EB3).